A 279-amino-acid chain; its full sequence is MGIVFNYIDPVAFNLGPLSVRWYGIIIAVGILLGYFVAQRALVKAGLHKDTLVDIIFYSALFGFIAARIYFVIFQWPYYAENPSEIIKIWHGGIAIHGGLIGGFIAGVIVCKVKNLNPFQIGDIVAPSIILAQGIGRWGNFMNHEAHGGSVSRAFLEQLHLPNFIIENMYINGQYYHPTFLYESIWDVAGFIILVNIRKHLKLGETFFLYLTWYSIGRFFIEGLRTDSLMLTSNIRVAQLVSILLILISISLIVYRRIKYNPPLYSKVGALPWPTKKVK.

The next 3 helical transmembrane spans lie at leucine 18 to alanine 38, isoleucine 55 to glutamine 75, and isoleucine 89 to isoleucine 109. A 1,2-diacyl-sn-glycero-3-phospho-(1'-sn-glycerol) is bound at residue arginine 137. Helical transmembrane passes span leucine 203–glycine 223 and isoleucine 235–tyrosine 255.

Belongs to the Lgt family.

Its subcellular location is the cell membrane. The catalysed reaction is L-cysteinyl-[prolipoprotein] + a 1,2-diacyl-sn-glycero-3-phospho-(1'-sn-glycerol) = an S-1,2-diacyl-sn-glyceryl-L-cysteinyl-[prolipoprotein] + sn-glycerol 1-phosphate + H(+). It participates in protein modification; lipoprotein biosynthesis (diacylglyceryl transfer). Catalyzes the transfer of the diacylglyceryl group from phosphatidylglycerol to the sulfhydryl group of the N-terminal cysteine of a prolipoprotein, the first step in the formation of mature lipoproteins. The sequence is that of Phosphatidylglycerol--prolipoprotein diacylglyceryl transferase from Staphylococcus aureus (strain USA300).